A 150-amino-acid chain; its full sequence is Large ribosomal subunit protein bL9 (150 aa).

Belongs to the bacterial ribosomal protein bL9 family.

In terms of biological role, binds to the 23S rRNA. The sequence is that of Large ribosomal subunit protein bL9 from Burkholderia thailandensis (strain ATCC 700388 / DSM 13276 / CCUG 48851 / CIP 106301 / E264).